The primary structure comprises 562 residues: Wee1-like protein kinase 2 (562 aa).

2 disordered regions span residues 1–86 (MRTA…DKGV) and 161–181 (YRQA…DDCS). The segment covering 35–48 (HSNQRGSPVNSWRA) has biased composition (polar residues). One can recognise a Protein kinase domain in the interval 217 to 491 (FLEIEKIGAG…AKNSLLRRCV (275 aa)). ATP contacts are provided by residues 223 to 231 (IGAGEFGSV) and Lys246. Asp344 functions as the Proton acceptor in the catalytic mechanism. Residues Asn349 and Asp381 each contribute to the Mg(2+) site. A coiled-coil region spans residues 494–520 (AAQLQKQLNVEKFKTAMLERELKAAKL).

It belongs to the protein kinase superfamily. Ser/Thr protein kinase family. WEE1 subfamily.

The protein resides in the nucleus. It carries out the reaction L-tyrosyl-[protein] + ATP = O-phospho-L-tyrosyl-[protein] + ADP + H(+). In terms of biological role, oocyte-specific protein tyrosine kinase that phosphorylates and inhibits cdk1 and acts as a regulator of meiosis. Required to maintain meiotic arrest in oocytes by phosphorylating cdk1 at 'Tyr-15', leading to inhibit cdk1 activity and prevent meiotic reentry. This is Wee1-like protein kinase 2 (wee2) from Xenopus tropicalis (Western clawed frog).